A 595-amino-acid chain; its full sequence is Ketol-acid reductoisomerase, chloroplastic (595 aa).

The transit peptide at 1-72 (MAATAATTFS…GGGSALSAQM (72 aa)) directs the protein to the chloroplast. The 199-residue stretch at 108–306 (VRGGRNLFPL…ALGSPFTFAT (199 aa)) folds into the KARI N-terminal Rossmann domain. Residues 129–136 (GVIGWGSQ), 162–167 (RKGSNS), and 201–205 (SDSAQ) each bind NADP(+). Residue His-226 is part of the active site. KARI C-terminal knotted domains lie at 307 to 455 (TLEQ…RPAG) and 456 to 592 (DLGP…RPEL). Residues Asp-315, Glu-319, Glu-492, and Glu-496 each coordinate Mg(2+). Ser-518 contributes to the substrate binding site.

The protein belongs to the ketol-acid reductoisomerase family. In terms of assembly, homodimer. Requires Mg(2+) as cofactor.

Its subcellular location is the plastid. It is found in the chloroplast. It catalyses the reaction (2R)-2,3-dihydroxy-3-methylbutanoate + NADP(+) = (2S)-2-acetolactate + NADPH + H(+). The enzyme catalyses (2R,3R)-2,3-dihydroxy-3-methylpentanoate + NADP(+) = (S)-2-ethyl-2-hydroxy-3-oxobutanoate + NADPH + H(+). The protein operates within amino-acid biosynthesis; L-isoleucine biosynthesis; L-isoleucine from 2-oxobutanoate: step 2/4. Its pathway is amino-acid biosynthesis; L-valine biosynthesis; L-valine from pyruvate: step 2/4. The chain is Ketol-acid reductoisomerase, chloroplastic (AHRI) from Spinacia oleracea (Spinach).